The sequence spans 635 residues: MSILEHISSPADVKTLSYEQLDTLASEIREFLVEKVSATGGHLGPNLGVVELTLAIHRVFSSPSDPIIFDTSHQSYVHKILTGRAGAFDTLRQKDGLSGYTSRAESNHDWTESSHASASLSYADGLAKAFQLKGEKARNVVAVVGDGALTGGMCWEALNNIATGTERNVVVVVNDNGRSYSPTIGGFADNLAALRMKPSYDRVMEQGKTTLKSLGWVGERTFEALHAFKEGVKSSVIPTEMFPELGMKYIGPVNGHNTKAVEAALRYGRDHKGPLIVHVVTEKGKGYAPAENDVAELMHSTGVINPKTGEPVGTKSPGWTSVFSKELVKAGETRKDIVAITAAMAGPTGLSAFGEKFPDRLFDVGIAEQHAMTSAAGLALGGLHPVVAIYSTFLNRAFDQLLMDVGLLNLPVTIVLDRAGVTGSDGASHNGVWDFAVAGIVPGIRIAAPRDDENLKELFAEALTIDSPTVVRFPKGELPSRLSAQQRFDDGAELLHYSDSDHEDSTPSILVVAVGSLVSSVMEIVSDIEECGCNVTVVDPRWAVPVAPSIVGLAADHELVITVEDGIIHGGVGAMINEALNASEIDVPVRNLAFPEVFPEHQSRNQLLDAVGLSPRGIKTQIIAAAESLYLLDKE.

Thiamine diphosphate-binding positions include H73 and 114-116 (SHA). D146 is a Mg(2+) binding site. Residues 147–148 (GA), N176, Y287, and E368 contribute to the thiamine diphosphate site. N176 lines the Mg(2+) pocket.

This sequence belongs to the transketolase family. DXPS subfamily. Homodimer. Mg(2+) serves as cofactor. Thiamine diphosphate is required as a cofactor.

The enzyme catalyses D-glyceraldehyde 3-phosphate + pyruvate + H(+) = 1-deoxy-D-xylulose 5-phosphate + CO2. Its pathway is metabolic intermediate biosynthesis; 1-deoxy-D-xylulose 5-phosphate biosynthesis; 1-deoxy-D-xylulose 5-phosphate from D-glyceraldehyde 3-phosphate and pyruvate: step 1/1. Functionally, catalyzes the acyloin condensation reaction between C atoms 2 and 3 of pyruvate and glyceraldehyde 3-phosphate to yield 1-deoxy-D-xylulose-5-phosphate (DXP). This chain is 1-deoxy-D-xylulose-5-phosphate synthase, found in Corynebacterium diphtheriae (strain ATCC 700971 / NCTC 13129 / Biotype gravis).